A 397-amino-acid chain; its full sequence is Phosphoglycerate kinase (397 aa).

Substrate contacts are provided by residues 25–27 (DLN), R41, 64–67 (HLGR), R118, and R151. ATP-binding positions include K202, E324, and 350–353 (GGDT).

This sequence belongs to the phosphoglycerate kinase family. In terms of assembly, monomer.

The protein localises to the cytoplasm. It carries out the reaction (2R)-3-phosphoglycerate + ATP = (2R)-3-phospho-glyceroyl phosphate + ADP. It functions in the pathway carbohydrate degradation; glycolysis; pyruvate from D-glyceraldehyde 3-phosphate: step 2/5. This chain is Phosphoglycerate kinase, found in Leptothrix cholodnii (strain ATCC 51168 / LMG 8142 / SP-6) (Leptothrix discophora (strain SP-6)).